We begin with the raw amino-acid sequence, 1500 residues long: Carbamoyl-phosphate synthase [ammonia], mitochondrial (1500 aa).

The transit peptide at 1-38 directs the protein to the mitochondrion; that stretch reads MTRILTACKVVKTLKSGFGLANVTSKRQWDFSRPGIRL. Positions 39 to 218 are anthranilate phosphoribosyltransferase homolog; the sequence is LSVKAQTAHI…VKVFGKGNPT (180 aa). 3 positions are modified to N6-acetyllysine; alternate: Lys-55, Lys-57, and Lys-119. Lys-55 carries the N6-glutaryllysine; alternate modification. Residues Lys-55, Lys-57, and Lys-119 each carry the N6-succinyllysine; alternate modification. A Phosphoserine modification is found at Ser-148. N6-acetyllysine; alternate occurs at positions 157 and 171. Lys-157 is subject to N6-succinyllysine; alternate. The residue at position 171 (Lys-171) is an N6-glutaryllysine; alternate. The residue at position 176 (Lys-176) is an N6-glutaryllysine. Residue Lys-182 is modified to N6-acetyllysine. The residue at position 189 (Ser-189) is a Phosphoserine. Lys-197 is subject to N6-acetyllysine. Residues Lys-207, Lys-210, Lys-214, Lys-219, and Lys-228 each carry the N6-acetyllysine; alternate modification. Residues Lys-207, Lys-210, Lys-214, Lys-219, and Lys-228 each carry the N6-glutaryllysine; alternate modification. Lys-207 bears the N6-succinyllysine; alternate mark. Residue Lys-214 is modified to N6-succinyllysine; alternate. A Glutamine amidotransferase type-1 domain is found at 219-404; it reads KVVAVDCGIK…FSLIKKGKGT (186 aa). Lys-237 is modified (N6-glutaryllysine). Residue Lys-279 is modified to N6-acetyllysine. N6-acetyllysine; alternate is present on residues Lys-280, Lys-287, Lys-307, and Lys-310. The residue at position 280 (Lys-280) is an N6-glutaryllysine; alternate. N6-succinyllysine; alternate is present on residues Lys-287 and Lys-307. N6-glutaryllysine; alternate is present on residues Lys-307 and Lys-310. N6-succinyllysine is present on Lys-400. 4 positions are modified to N6-glutaryllysine; alternate: Lys-402, Lys-412, Lys-453, and Lys-458. 2 positions are modified to N6-succinyllysine; alternate: Lys-402 and Lys-412. N6-acetyllysine; alternate occurs at positions 412, 453, 458, 522, 527, and 532. N6-succinyllysine; alternate is present on residues Lys-458, Lys-522, and Lys-527. Residues Lys-527 and Lys-532 each carry the N6-glutaryllysine; alternate modification. A Phosphoserine; alternate modification is found at Ser-537. Ser-537 carries O-linked (GlcNAc) serine; alternate glycosylation. Position 540 is a phosphoserine (Ser-540). Positions 551 to 743 constitute an ATP-grasp 1 domain; sequence SDKLNEINEK…LAFIAAKIAL (193 aa). N6-acetyllysine; alternate occurs at positions 553 and 560. At Lys-553 the chain carries N6-glutaryllysine; alternate. Residues Lys-553 and Lys-560 each carry the N6-succinyllysine; alternate modification. A Phosphoserine modification is found at Ser-569. Residues Lys-575, Lys-603, and Lys-612 each carry the N6-acetyllysine; alternate modification. Lys-575, Lys-603, and Lys-612 each carry N6-succinyllysine; alternate. Lys-630 bears the N6-acetyllysine mark. Lys-728 carries the N6-glutaryllysine modification. N6-acetyllysine; alternate occurs at positions 751, 757, 772, 793, 811, 831, 841, and 856. An N6-succinyllysine; alternate mark is found at Lys-751 and Lys-757. N6-glutaryllysine; alternate occurs at positions 757, 772, 793, and 811. An N6-succinyllysine; alternate modification is found at Lys-793. Residue Lys-831 is modified to N6-succinyllysine; alternate. Lys-841 and Lys-856 each carry N6-glutaryllysine; alternate. N6-glutaryllysine is present on Lys-869. Residues Lys-875, Lys-889, and Lys-892 each carry the N6-acetyllysine; alternate modification. An N6-glutaryllysine; alternate mark is found at Lys-875, Lys-889, and Lys-892. An N6-succinyllysine; alternate mark is found at Lys-875, Lys-889, and Lys-892. 2 positions are modified to phosphoserine: Ser-896 and Ser-898. N6-acetyllysine; alternate is present on residues Lys-908, Lys-915, and Lys-919. N6-glutaryllysine; alternate is present on residues Lys-908, Lys-915, and Lys-919. N6-succinyllysine; alternate is present on residues Lys-915 and Lys-919. The residue at position 935 (Lys-935) is an N6-acetyllysine. Ser-1036 is modified (phosphoserine). An N6-acetyllysine; alternate modification is found at Lys-1074. The residue at position 1074 (Lys-1074) is an N6-glutaryllysine; alternate. An N6-succinyllysine; alternate modification is found at Lys-1074. 3 positions are modified to phosphoserine: Ser-1079, Ser-1090, and Ser-1093. Residues 1093–1284 enclose the ATP-grasp 2 domain; that stretch reads SAVLDELKVA…FIDVATKVMI (192 aa). At Lys-1100 the chain carries N6-acetyllysine; alternate. Position 1100 is an N6-succinyllysine; alternate (Lys-1100). Position 1149 is an N6-succinyllysine (Lys-1149). Lys-1168 and Lys-1183 each carry N6-acetyllysine; alternate. An N6-glutaryllysine; alternate mark is found at Lys-1168 and Lys-1183. 2 positions are modified to N6-succinyllysine; alternate: Lys-1168 and Lys-1183. Position 1203 is a phosphoserine (Ser-1203). Lys-1222 is subject to N6-acetyllysine. Lys-1224 carries the N6-glutaryllysine modification. An N6-acetyllysine; alternate mark is found at Lys-1232, Lys-1269, and Lys-1291. N6-succinyllysine; alternate is present on residues Lys-1232, Lys-1269, and Lys-1291. A glycan (O-linked (GlcNAc) serine) is linked at Ser-1331. O-linked (GlcNAc) threonine glycosylation occurs at Thr-1332. Residues 1355 to 1500 form the MGS-like domain; sequence FKIPQKGILI…YRQYSAGKAA (146 aa). Position 1356 is an N6-acetyllysine; alternate (Lys-1356). An N6-glutaryllysine; alternate mark is found at Lys-1356 and Lys-1360. Residues Lys-1356 and Lys-1360 each carry the N6-succinyllysine; alternate modification. N-acetyl-L-glutamate-binding residues include Thr-1391, Thr-1394, and Trp-1410. Residues Ser-1419 and Ser-1431 each carry the phosphoserine modification. N-acetyl-L-glutamate-binding residues include Asn-1437 and Asn-1440. Lys-1444 is modified (N6-acetyllysine; alternate). Lys-1444 is subject to N6-succinyllysine; alternate. Residue Asn-1449 participates in N-acetyl-L-glutamate binding. N6-acetyllysine; alternate occurs at positions 1471, 1479, and 1486. Lys-1471, Lys-1479, and Lys-1486 each carry N6-succinyllysine; alternate. N6-glutaryllysine; alternate is present on residues Lys-1479 and Lys-1486.

As to quaternary structure, can form homooligomers (monomers as predominant form and dimers). 50% of the mature protein that was isolated had Leu-39 as its N-terminal residue and 50% had Ser-40 suggesting two adjacent processing sites. However, the possibility of proteolytic removal of Leu-39 during the isolation of the enzyme cannot be excluded. Undergoes proteolytic cleavage in the C-terminal region corresponding to the loss of approximately 12 AA residues from the C-terminus. In terms of processing, succinylated at Lys-287 and Lys-1291. Desuccinylated at Lys-1291 by SIRT5, leading to activation. Post-translationally, glutarylated. Glutarylation levels increase during fasting. Deglutarylated by SIRT5 at Lys-55, Lys-219, Lys-412, Lys-889, Lys-892, Lys-915, Lys-1360 and Lys-1486, leading to activation. In terms of tissue distribution, primarily in the liver and small intestine.

Its subcellular location is the mitochondrion. It localises to the nucleus. It is found in the nucleolus. The protein localises to the cell membrane. It catalyses the reaction hydrogencarbonate + NH4(+) + 2 ATP = carbamoyl phosphate + 2 ADP + phosphate + 2 H(+). With respect to regulation, requires N-acetyl-L-glutamate (NAG) as an allosteric activator. N-acetyl-L-beta-phenylglutamate (Phe-NAG) can also activate CPSase I, but with an activation constant that is 2-fold higher than that for NAG. Its function is as follows. Involved in the urea cycle of ureotelic animals where the enzyme plays an important role in removing excess ammonia from the cell. The sequence is that of Carbamoyl-phosphate synthase [ammonia], mitochondrial (Cps1) from Rattus norvegicus (Rat).